Here is a 459-residue protein sequence, read N- to C-terminus: Cysteine--tRNA ligase (459 aa).

Cys28 lines the Zn(2+) pocket. Positions 30 to 40 (VTIYDLCHIGH) match the 'HIGH' region motif. Positions 209, 234, and 238 each coordinate Zn(2+). The short motif at 266–270 (KMSKS) is the 'KMSKS' region element. Lys269 contributes to the ATP binding site.

Belongs to the class-I aminoacyl-tRNA synthetase family. As to quaternary structure, monomer. Requires Zn(2+) as cofactor.

It localises to the cytoplasm. The enzyme catalyses tRNA(Cys) + L-cysteine + ATP = L-cysteinyl-tRNA(Cys) + AMP + diphosphate. The protein is Cysteine--tRNA ligase of Vibrio cholerae serotype O1 (strain ATCC 39541 / Classical Ogawa 395 / O395).